We begin with the raw amino-acid sequence, 209 residues long: Orotate phosphoribosyltransferase (209 aa).

5-phospho-alpha-D-ribose 1-diphosphate contacts are provided by residues R96, K100, H102, and 122–130 (EDLISTGGS). S126 provides a ligand contact to orotate.

This sequence belongs to the purine/pyrimidine phosphoribosyltransferase family. PyrE subfamily. In terms of assembly, homodimer. Requires Mg(2+) as cofactor.

It catalyses the reaction orotidine 5'-phosphate + diphosphate = orotate + 5-phospho-alpha-D-ribose 1-diphosphate. Its pathway is pyrimidine metabolism; UMP biosynthesis via de novo pathway; UMP from orotate: step 1/2. Catalyzes the transfer of a ribosyl phosphate group from 5-phosphoribose 1-diphosphate to orotate, leading to the formation of orotidine monophosphate (OMP). This is Orotate phosphoribosyltransferase from Streptococcus agalactiae serotype Ia (strain ATCC 27591 / A909 / CDC SS700).